A 300-amino-acid polypeptide reads, in one-letter code: Acyl-CoA-binding domain-containing protein 6 (300 aa).

Low complexity predominate over residues 1 to 19; that stretch reads MASRSPSSSPDSATGSGTD. The segment at 1–43 is disordered; sequence MASRSPSSSPDSATGSGTDPARPDTGEPLGGGSDSDSDFGLGK. An ACB domain is found at 60 to 145; sequence LENEFESAAD…VHALDPEGSQ (86 aa). Residues 87–91, Lys113, and Tyr132 contribute to the an acyl-CoA site; that span reads YARFK. Positions 142 to 162 are disordered; sequence EGSQKSSERRGGEKRTGFGGP. Positions 147 to 157 are enriched in basic and acidic residues; that stretch reads SSERRGGEKRT. ANK repeat units lie at residues 209-238 and 242-271; these read EGRA…DINS and EGQT…DPSI. The tract at residues 270-300 is disordered; the sequence is SIKDQEGSLPEEVTESSAISSLLRQYTAPKG. A compositionally biased stretch (polar residues) spans 284-293; that stretch reads ESSAISSLLR.

As to expression, higly expressed in the central nervous system, developing eyes, otic vesicle, and trunk muscles.

It localises to the cytoplasm. Its subcellular location is the nucleus. Binds long-chain acyl-coenzyme A molecules with a strong preference for unsaturated C18:1-CoA. Does not bind fatty acids. Plays a role in protein N-myristoylation. In Danio rerio (Zebrafish), this protein is Acyl-CoA-binding domain-containing protein 6 (acbd6).